Consider the following 430-residue polypeptide: Inactive metallocarboxypeptidase ECM14 (430 aa).

The N-terminal stretch at M1 to G24 is a signal peptide. A propeptide spanning residues L25–R105 is cleaved from the precursor. A glycan (N-linked (GlcNAc...) asparagine) is linked at N41. The region spanning E120–L425 is the Peptidase M14 domain. Zn(2+)-binding residues include H182 and E185. Substrate-binding positions include H182 to E185, R240, and D257 to H258. The cysteines at positions 251 and 272 are disulfide-linked. N295 is a glycosylation site (N-linked (GlcNAc...) asparagine). H310 is a Zn(2+) binding site. Residue S311–Y312 participates in substrate binding.

This sequence belongs to the peptidase M14 family. The cofactor is Zn(2+). In terms of processing, N-glycosylated.

It localises to the vacuole. The protein localises to the secreted. In terms of biological role, inactive carboxypeptidase that may play a role in cell wall organization and biogenesis. The protein is Inactive metallocarboxypeptidase ECM14 of Saccharomyces cerevisiae (strain ATCC 204508 / S288c) (Baker's yeast).